The following is a 538-amino-acid chain: Putative outer membrane porin BglH (538 aa).

Residues 1–25 (MFRRNIITSAILLMAPLAFSAQSLA) form the signal peptide.

It belongs to the porin LamB (TC 1.B.3) family.

Its subcellular location is the cell outer membrane. Functionally, may be a sugar porin with a broad carbohydrate specificity. This chain is Putative outer membrane porin BglH (bglH), found in Escherichia coli O6:H1 (strain CFT073 / ATCC 700928 / UPEC).